A 413-amino-acid chain; its full sequence is Protein cycle (413 aa).

The segment at 1–43 is disordered; that stretch reads MEVQEFCENMEEIEDENYDEEKSARTSDENRKQNHSEIEKRRR. A compositionally biased stretch (acidic residues) spans 8 to 19; it reads ENMEEIEDENYD. Positions 20–41 are enriched in basic and acidic residues; that stretch reads EEKSARTSDENRKQNHSEIEKR. Residues 30–83 form the bHLH domain; it reads NRKQNHSEIEKRRRDKMNTYINELSSMIPMCFAMQRKLDKLTVLRMAVQHLRGI. Residues 104–175 form the PAS 1 domain; sequence DQELKMIILQ…EQLSSLEQCP (72 aa). The tract at residues 219-242 is disordered; it reads NQIKEESDTSSSSRSSTKRKSRLT. The region spanning 297-367 is the PAS 2 domain; the sequence is PASLDNHPNI…ESHKMVMQVP (71 aa). A PAC domain is found at 372–413; it reads TQVYRFRCKDNSYIQLQSEWRAFKNPWTSEIDYIIAKNSVFL.

As to quaternary structure, efficient DNA binding requires dimerization with another bHLH protein. Forms a heterodimer with Clock in order to activate PER and TIM transcription. As to expression, expressed in head and ovary.

The protein localises to the nucleus. In terms of biological role, putative transcription factor involved in the generation of biological rhythms. Activates cycling transcription of Period (PER) and Timeless (TIM) by binding to the E-box (5'-CACGTG-3') present in their promoters. This is Protein cycle (cyc) from Drosophila melanogaster (Fruit fly).